Consider the following 407-residue polypeptide: Argininosuccinate synthase (407 aa).

ATP is bound by residues 16–24 and A44; that span reads AYSGGLDTS. Y96 and S101 together coordinate L-citrulline. G126 contributes to the ATP binding site. 3 residues coordinate L-aspartate: T128, N132, and D133. Residue N132 participates in L-citrulline binding. L-citrulline contacts are provided by R136, S185, S194, E270, and Y282.

The protein belongs to the argininosuccinate synthase family. Type 1 subfamily. As to quaternary structure, homotetramer.

Its subcellular location is the cytoplasm. It carries out the reaction L-citrulline + L-aspartate + ATP = 2-(N(omega)-L-arginino)succinate + AMP + diphosphate + H(+). Its pathway is amino-acid biosynthesis; L-arginine biosynthesis; L-arginine from L-ornithine and carbamoyl phosphate: step 2/3. In Shewanella oneidensis (strain ATCC 700550 / JCM 31522 / CIP 106686 / LMG 19005 / NCIMB 14063 / MR-1), this protein is Argininosuccinate synthase.